Consider the following 101-residue polypeptide: Large ribosomal subunit protein uL24 (101 aa).

The protein belongs to the universal ribosomal protein uL24 family. As to quaternary structure, part of the 50S ribosomal subunit.

Functionally, one of two assembly initiator proteins, it binds directly to the 5'-end of the 23S rRNA, where it nucleates assembly of the 50S subunit. In terms of biological role, one of the proteins that surrounds the polypeptide exit tunnel on the outside of the subunit. This is Large ribosomal subunit protein uL24 from Clostridioides difficile (strain 630) (Peptoclostridium difficile).